Consider the following 84-residue polypeptide: Dolichol phosphate-mannose biosynthesis regulatory protein (84 aa).

The next 2 membrane-spanning stretches (helical) occupy residues 11–31 (FGLVAVSLIIFTYYTTWVILL) and 49–69 (YAVLLPLAAGLLLLLFVGLFI).

Belongs to the DPM2 family. As to quaternary structure, component of the dolichol-phosphate mannose (DPM) synthase complex composed of DPM1, DPM2 and DPM3; in the complex interacts directly with DPM3. Component of the glycosylphosphatidylinositol-N-acetylglucosaminyltransferase (GPI-GnT) complex composed at least by PIGA, PIGC, PIGH, PIGP, PIGQ, PIGY and DPM2. Interacts with PIGA, PIGC and PIGQ.

The protein resides in the endoplasmic reticulum membrane. It participates in protein modification; protein glycosylation. Regulates the biosynthesis of dolichol phosphate-mannose. Regulatory subunit of the dolichol-phosphate mannose (DPM) synthase complex; essential for the ER localization and stable expression of DPM1. Part of the glycosylphosphatidylinositol-N-acetylglucosaminyltransferase (GPI-GnT) complex that catalyzes the transfer of N-acetylglucosamine from UDP-N-acetylglucosamine to phosphatidylinositol and participates in the first step of GPI biosynthesis. May act by regulating the GPI-GNT complex. This chain is Dolichol phosphate-mannose biosynthesis regulatory protein, found in Rattus norvegicus (Rat).